Here is a 126-residue protein sequence, read N- to C-terminus: MPEPAKSAPAPKKGSKKAVTKTQKKGDKKRRKSRKESYSIYVYKVLKQVHPDTGISSKAMGIMNSFVNDIFERIAGEASRLAHYNKRSTITSREIQTAVRLLLPGELAKHAVSEGTKAVTKYTSSK.

The span at 1-12 shows a compositional bias: low complexity; the sequence is MPEPAKSAPAPK. Residues 1 to 35 are disordered; the sequence is MPEPAKSAPAPKKGSKKAVTKTQKKGDKKRRKSRK. An N6-acetyllysine mark is found at Lys6 and Lys13. Residues 13–34 show a composition bias toward basic residues; sequence KGSKKAVTKTQKKGDKKRRKSR. Ser15 carries the phosphoserine modification. N6-acetyllysine occurs at positions 16 and 21. An O-linked (GlcNAc) serine glycan is attached at Ser113. Residue Lys121 forms a Glycyl lysine isopeptide (Lys-Gly) (interchain with G-Cter in ubiquitin) linkage.

Belongs to the histone H2B family. The nucleosome is a histone octamer containing two molecules each of H2A, H2B, H3 and H4 assembled in one H3-H4 heterotetramer and two H2A-H2B heterodimers. The octamer wraps approximately 147 bp of DNA. In terms of processing, monoubiquitination of Lys-121 by the BRE1 gives a specific tag for epigenetic transcriptional activation and is also prerequisite for histone H3 'Lys-4' and 'Lys-79' methylation. Phosphorylated on Ser-15 during apoptosis; which facilitates apoptotic chromatin condensation. Post-translationally, glcNAcylation at Ser-113 promotes monoubiquitination of Lys-121. It fluctuates in response to extracellular glucose, and associates with transcribed genes.

The protein localises to the nucleus. It is found in the chromosome. Core component of nucleosome. Nucleosomes wrap and compact DNA into chromatin, limiting DNA accessibility to the cellular machineries which require DNA as a template. Histones thereby play a central role in transcription regulation, DNA repair, DNA replication and chromosomal stability. DNA accessibility is regulated via a complex set of post-translational modifications of histones, also called histone code, and nucleosome remodeling. This Gallus gallus (Chicken) protein is Histone H2B 5 (H2B-V).